Here is a 349-residue protein sequence, read N- to C-terminus: MLIAQRPTLIEDPISEFRSRFVIEPLEPGFGYTLGNSLRRTLLSSIPGASVTSIRIDGVLHEFSTVPGVKEDVTDLILNLKELVVSSDNDEPTVMYLRKQGPGEVTAADIAPPAGVEVHNPELRLATLNDKGKLEIELTVERGRGYVSAAQNKQAGQEIGRIPIDSIYSPVLKVTYKVEATRVEQRTDFDRLIVDVETKPSISPRDAMASAGKTLVGLFGLAQELNAEAEGVDIGPSAADAALAADLALPIEEMDLTVRSYNCLKREGIHTIGELVSRSEADLLDIRNFGQKSIDEVKTKLGAMGLQLKDSPPGFDPRQAVDTYGTDAYSPSFSDPSDDGAEFIETEQY.

The interval Met-1–Asn-226 is alpha N-terminal domain (alpha-NTD). Residues Ala-241–Tyr-349 form an alpha C-terminal domain (alpha-CTD) region. A disordered region spans residues Lys-309 to Tyr-349. Residues Pro-336–Tyr-349 are compositionally biased toward acidic residues.

Belongs to the RNA polymerase alpha chain family. In terms of assembly, homodimer. The RNAP catalytic core consists of 2 alpha, 1 beta, 1 beta' and 1 omega subunit. When a sigma factor is associated with the core the holoenzyme is formed, which can initiate transcription.

The catalysed reaction is RNA(n) + a ribonucleoside 5'-triphosphate = RNA(n+1) + diphosphate. In terms of biological role, DNA-dependent RNA polymerase catalyzes the transcription of DNA into RNA using the four ribonucleoside triphosphates as substrates. The sequence is that of DNA-directed RNA polymerase subunit alpha from Frankia casuarinae (strain DSM 45818 / CECT 9043 / HFP020203 / CcI3).